The following is a 363-amino-acid chain: Peptide chain release factor 1 (363 aa).

The residue at position 237 (Gln-237) is an N5-methylglutamine. The segment at 281 to 302 (QQAEDEKSHAEEQTIRRSLVAS) is disordered. The span at 282–295 (QAEDEKSHAEEQTI) shows a compositional bias: basic and acidic residues.

Belongs to the prokaryotic/mitochondrial release factor family. Methylated by PrmC. Methylation increases the termination efficiency of RF1.

Its subcellular location is the cytoplasm. Its function is as follows. Peptide chain release factor 1 directs the termination of translation in response to the peptide chain termination codons UAG and UAA. This chain is Peptide chain release factor 1, found in Psychromonas ingrahamii (strain DSM 17664 / CCUG 51855 / 37).